The primary structure comprises 353 residues: MEKYLTKMPIKSKANEVPKEEAGVKKETPKVARKATKKDTPKELKDKENAGDDNTPKQTKGRPGRPAAKRKNLDTPDVTEKLAMEEENPPKRRSSRLTRSTRSMAEDGSPSPEKEKPEKLPFIKYKGAIKYFTESQDIAASADDVLQWVEKQKDEVVPMAFDMEWPFSFQTGPGKSAVIQICVDEKCCYIYQLTNVKKLPAALVALINHPKVRLHGVNIKNDFRKLARDFPEVTAEPLIEKCVDLGLWCNEVCETGGRWSLERLTNFIAKKAMDKSKKVRMSKWHVIPLDENQLMYAAIDVYIGQVIYRELERREKVKIKNEEEFKEKNGDAAFKAMKALGETFLTKINEVTL.

Residues 1–119 (MEKYLTKMPI…PSPEKEKPEK (119 aa)) are disordered. Composition is skewed to basic and acidic residues over residues 13–30 (KANE…ETPK) and 37–50 (KKDT…KENA). Positions 59-70 (TKGRPGRPAAKR) are enriched in basic residues. Basic and acidic residues predominate over residues 71 to 90 (KNLDTPDVTEKLAMEEENPP). Residues S103, S109, and S111 each carry the phosphoserine modification. The 3'-5' exonuclease domain maps to 145–313 (VLQWVEKQKD…GQVIYRELER (169 aa)). The Mg(2+) site is built by D162, E164, and D300.

The protein belongs to the WRNexo family.

It localises to the nucleus. Its function is as follows. Has exonuclease activity on both single-stranded and duplex templates bearing overhangs, but not blunt ended duplex DNA, and cleaves in a 3'-5' direction. Essential for the formation of DNA replication focal centers. Has an important role in maintaining genome stability. This is 3'-5' exonuclease from Drosophila melanogaster (Fruit fly).